Reading from the N-terminus, the 830-residue chain is C-Jun-amino-terminal kinase-interacting protein 2 (830 aa).

Disordered stretches follow at residues 1–26, 44–354, 367–438, 452–504, and 539–574; these read MADR…PPQD, CGLG…ADSP, EGSS…PGPC, LWAT…GSTA, and GNDS…PDSP. Residues 77-105 are compositionally biased toward acidic residues; sequence DFQEFEMIDDNEEEDDEEEEEEEEEEEDG. Positions 111-278 are JNK-binding domain (JBD); that stretch reads AGGGPGSQAL…RMISSISETE (168 aa). A compositionally biased stretch (polar residues) spans 142-172; that stretch reads LHLTTLGAQDSLNNNNGGFTSAPPSSWQETV. 2 stretches are compositionally biased toward low complexity: residues 176-190 and 218-227; these read PAQE…PLLP and ASSGGASPSS. Residues 233–249 show a composition bias toward basic and acidic residues; it reads ADLRSHSSGGHEGRRSS. Positions 242–504 are necessary for interaction with FGF13; it reads GHEGRRSSQE…PGSRTTGSTA (263 aa). Residues S257, S304, and S307 each carry the phosphoserine modification. Residues 271-307 are compositionally biased toward low complexity; sequence ISSISETELELSSDGGSSSGRSSHLTNSIEEASSPAS. A compositionally biased stretch (acidic residues) spans 333–352; it reads TNSEYESGSESEPDLSEDAD. Low complexity predominate over residues 427–437; the sequence is APRLGPAQPGP. 2 stretches are compositionally biased toward acidic residues: residues 471–490 and 541–555; these read SEEE…DAED and DSEE…EEEA. Positions 610–671 constitute an SH3 domain; it reads EREQTHRAVF…PAFYAHAVPG (62 aa). The PID domain occupies 683–819; that stretch reads PCWVDRFDVQ…FLEYYQEHLA (137 aa).

Belongs to the JIP scaffold family. Forms homo- or heterooligomeric complexes. Binds specific components of the JNK signaling pathway namely JNK1, JNK2, JNK3, MAP2K7, MAP3K10, MAP3K11, MAP3K12 and MAPK13. Also binds the proline-rich domain-containing splice variant of apolipoprotein E receptor 2 (ApoER2). Binds the TPR motif-containing C-terminal of kinesin light chain. Binds the cytoplasmic tails of LRP1 and LRP2 (Megalin). Interacts with DCLK2. Interacts with FGF13; enables the interaction with MAPK13 and may regulate the MAPK8IP2 scaffolding activity. Interacts with TIAM1 and TIAM2. Interacts with SH3RF2. In terms of tissue distribution, highly expressed in brain. Expressed in all neurons. Also expressed in testis, primarily in the epididymal epidermis.

The protein resides in the cytoplasm. In terms of biological role, the JNK-interacting protein (JIP) group of scaffold proteins selectively mediates JNK signaling by aggregating specific components of the MAPK cascade to form a functional JNK signaling module. JIP2 inhibits IL1 beta-induced apoptosis in insulin-secreting cells. The protein is C-Jun-amino-terminal kinase-interacting protein 2 (Mapk8ip2) of Mus musculus (Mouse).